We begin with the raw amino-acid sequence, 475 residues long: Ribulose bisphosphate carboxylase large chain (475 aa).

A propeptide spanning residues 1–2 (MS) is cleaved from the precursor. An N-acetylproline modification is found at Pro-3. N6,N6,N6-trimethyllysine is present on Lys-14. Asn-123 and Thr-173 together coordinate substrate. The Proton acceptor role is filled by Lys-175. Lys-177 lines the substrate pocket. Lys-201, Asp-203, and Glu-204 together coordinate Mg(2+). An N6-carboxylysine modification is found at Lys-201. Residue His-294 is the Proton acceptor of the active site. Residues Arg-295, His-327, and Ser-379 each contribute to the substrate site.

It belongs to the RuBisCO large chain family. Type I subfamily. As to quaternary structure, heterohexadecamer of 8 large chains and 8 small chains; disulfide-linked. The disulfide link is formed within the large subunit homodimers. Mg(2+) is required as a cofactor. In terms of processing, the disulfide bond which can form in the large chain dimeric partners within the hexadecamer appears to be associated with oxidative stress and protein turnover.

It localises to the plastid. It is found in the chloroplast. It catalyses the reaction 2 (2R)-3-phosphoglycerate + 2 H(+) = D-ribulose 1,5-bisphosphate + CO2 + H2O. The enzyme catalyses D-ribulose 1,5-bisphosphate + O2 = 2-phosphoglycolate + (2R)-3-phosphoglycerate + 2 H(+). Functionally, ruBisCO catalyzes two reactions: the carboxylation of D-ribulose 1,5-bisphosphate, the primary event in carbon dioxide fixation, as well as the oxidative fragmentation of the pentose substrate in the photorespiration process. Both reactions occur simultaneously and in competition at the same active site. The chain is Ribulose bisphosphate carboxylase large chain from Oenothera argillicola (Appalachian evening primrose).